Consider the following 639-residue polypeptide: DNA gyrase subunit B (639 aa).

Residues 392-402 (QAEELTRRKSA) are compositionally biased toward basic and acidic residues. The tract at residues 392–417 (QAEELTRRKSALESTSLPGKLADCQS) is disordered. Positions 423–537 (SELFIVEGDS…AGYVYAAQPP (115 aa)) constitute a Toprim domain. Residues glutamate 429, aspartate 502, and aspartate 504 each contribute to the Mg(2+) site.

This sequence belongs to the type II topoisomerase GyrB family. As to quaternary structure, heterotetramer, composed of two GyrA and two GyrB chains. In the heterotetramer, GyrA contains the active site tyrosine that forms a transient covalent intermediate with DNA, while GyrB binds cofactors and catalyzes ATP hydrolysis. Requires Mg(2+) as cofactor. Mn(2+) is required as a cofactor. It depends on Ca(2+) as a cofactor.

The protein localises to the cytoplasm. The catalysed reaction is ATP-dependent breakage, passage and rejoining of double-stranded DNA.. Functionally, a type II topoisomerase that negatively supercoils closed circular double-stranded (ds) DNA in an ATP-dependent manner to modulate DNA topology and maintain chromosomes in an underwound state. Negative supercoiling favors strand separation, and DNA replication, transcription, recombination and repair, all of which involve strand separation. Also able to catalyze the interconversion of other topological isomers of dsDNA rings, including catenanes and knotted rings. Type II topoisomerases break and join 2 DNA strands simultaneously in an ATP-dependent manner. This is DNA gyrase subunit B from Haloferax lucentense (strain DSM 14919 / JCM 9276 / NCIMB 13854 / Aa 2.2) (Haloferax alicantei).